Consider the following 66-residue polypeptide: Conotoxin Bu1.4 (66 aa).

A signal peptide spans 1-23; that stretch reads MGMRMRMMFTVFLLVVLANTVVS. The propeptide occupies 24–46; the sequence is FPSDRDSDGADAEASDEPVEFER. Residues 25–48 are disordered; that stretch reads PSDRDSDGADAEASDEPVEFERDE. Over residues 32 to 42 the composition is skewed to acidic residues; sequence GADAEASDEPV. Disulfide bonds link Cys51-Cys57 and Cys52-Cys62. Thr63 bears the Threonine amide mark.

Belongs to the conotoxin A superfamily. As to expression, expressed by the venom duct.

The protein resides in the secreted. The protein is Conotoxin Bu1.4 of Conus bullatus (Bubble cone).